The sequence spans 960 residues: RasGEF domain-containing serine/threonine-protein kinase X (960 aa).

In terms of domain architecture, Protein kinase spans 21–274 (LEFNEKIGKG…FDEILSQLKV (254 aa)). Residues 27–35 (IGKGSFGSV) and K48 each bind ATP. D140 acts as the Proton acceptor in catalysis. The span at 314 to 368 (NISFSPNNSNNNNNNNNNISNISPDITTGIQQINLSSSGGSNNSSPSTPPQGSQL) shows a compositional bias: low complexity. Disordered regions lie at residues 314–372 (NISF…VSLA) and 393–413 (GQLS…HKPS). One can recognise an N-terminal Ras-GEF domain in the interval 437–565 (PCYAALTSHI…LGTTISNNEL (129 aa)). The segment at 596-651 (NNNNNNNNNPVNNINNINNNNSVNSSSSNNNNNNNNNNSNNNNNNNNNNNNNNNNN) is disordered. One can recognise a Ras-GEF domain in the interval 712 to 957 (HSTELARQIT…KNNSLKCEPP (246 aa)).

The protein belongs to the protein kinase superfamily. TKL Ser/Thr protein kinase family.

It catalyses the reaction L-seryl-[protein] + ATP = O-phospho-L-seryl-[protein] + ADP + H(+). The catalysed reaction is L-threonyl-[protein] + ATP = O-phospho-L-threonyl-[protein] + ADP + H(+). Functionally, promotes the exchange of Ras-bound GDP by GTP. The protein is RasGEF domain-containing serine/threonine-protein kinase X (gefX) of Dictyostelium discoideum (Social amoeba).